The primary structure comprises 89 residues: Small ribosomal subunit protein uS15 (89 aa).

The protein belongs to the universal ribosomal protein uS15 family. In terms of assembly, part of the 30S ribosomal subunit. Forms a bridge to the 50S subunit in the 70S ribosome, contacting the 23S rRNA.

In terms of biological role, one of the primary rRNA binding proteins, it binds directly to 16S rRNA where it helps nucleate assembly of the platform of the 30S subunit by binding and bridging several RNA helices of the 16S rRNA. Its function is as follows. Forms an intersubunit bridge (bridge B4) with the 23S rRNA of the 50S subunit in the ribosome. The sequence is that of Small ribosomal subunit protein uS15 from Chlorobaculum tepidum (strain ATCC 49652 / DSM 12025 / NBRC 103806 / TLS) (Chlorobium tepidum).